The following is a 299-amino-acid chain: MVPTQVTIFSIIMYVLESLVIIVQSCTTVAVLFREWMHFQRLSPVETILISLGISHFCLQWTSMLYNFGTYSRPVLLFWKVSVVWEFMNILTFWLTSWLAVLYCVKVSSFTHPIFLWLRMKILKLVLWLILGALIASCLSIIPSVVKYHIQMELVTLDNLPKNNSLILRLQQFEWYFSNPLKMIGFGIPFFVFLASIILLTVSLVQHWVQMKHYSSSNSSLKAQFTVLKSLATFFTFFTSYFLTIVISFIGTVFDKKSWFWVCEAVIYGLVCIHFTSLMMSNPALKKALKLQFWSPEPS.

Residues 1–5 are Extracellular-facing; it reads MVPTQ. The chain crosses the membrane as a helical span at residues 6–26; it reads VTIFSIIMYVLESLVIIVQSC. Residues 27–47 lie on the Cytoplasmic side of the membrane; that stretch reads TTVAVLFREWMHFQRLSPVET. A helical transmembrane segment spans residues 48–68; sequence ILISLGISHFCLQWTSMLYNF. Residues 69–82 lie on the Extracellular side of the membrane; that stretch reads GTYSRPVLLFWKVS. The chain crosses the membrane as a helical span at residues 83–103; that stretch reads VVWEFMNILTFWLTSWLAVLY. At 104-125 the chain is on the cytoplasmic side; the sequence is CVKVSSFTHPIFLWLRMKILKL. A helical transmembrane segment spans residues 126–146; the sequence is VLWLILGALIASCLSIIPSVV. Residues 147–183 lie on the Extracellular side of the membrane; it reads KYHIQMELVTLDNLPKNNSLILRLQQFEWYFSNPLKM. N-linked (GlcNAc...) asparagine glycosylation occurs at N163. A helical membrane pass occupies residues 184–204; the sequence is IGFGIPFFVFLASIILLTVSL. At 205-233 the chain is on the cytoplasmic side; sequence VQHWVQMKHYSSSNSSLKAQFTVLKSLAT. A helical membrane pass occupies residues 234–254; it reads FFTFFTSYFLTIVISFIGTVF. At 255-258 the chain is on the extracellular side; that stretch reads DKKS. A helical transmembrane segment spans residues 259 to 279; the sequence is WFWVCEAVIYGLVCIHFTSLM. The Cytoplasmic portion of the chain corresponds to 280-299; it reads MSNPALKKALKLQFWSPEPS.

It belongs to the G-protein coupled receptor T2R family. As to quaternary structure, interacts with RTP3 and RTP4.

It localises to the cell membrane. Gustducin-coupled receptor implicated in the perception of bitter compounds in the oral cavity and the gastrointestinal tract. Signals through PLCB2 and the calcium-regulated cation channel TRPM5. This Mus musculus (Mouse) protein is Taste receptor type 2 member 16 (Tas2r16).